We begin with the raw amino-acid sequence, 227 residues long: Threonine--tRNA ligase (227 aa).

Residues 1–120 form a catalytic region; that stretch reads DIELKLSTRP…LIEHYEGAFP (120 aa).

It belongs to the class-II aminoacyl-tRNA synthetase family. Homodimer.

It localises to the cytoplasm. The catalysed reaction is tRNA(Thr) + L-threonine + ATP = L-threonyl-tRNA(Thr) + AMP + diphosphate + H(+). In terms of biological role, catalyzes the attachment of threonine to tRNA(Thr) in a two-step reaction: L-threonine is first activated by ATP to form Thr-AMP and then transferred to the acceptor end of tRNA(Thr). Also edits incorrectly charged L-seryl-tRNA(Thr). The protein is Threonine--tRNA ligase of Pseudomonas syringae pv. syringae.